The following is a 502-amino-acid chain: Mannitol 2-dehydrogenase (502 aa).

Ile37 to Ala48 provides a ligand contact to NAD(+).

Belongs to the mannitol dehydrogenase family. Monomer.

The catalysed reaction is D-mannitol + NAD(+) = D-fructose + NADH + H(+). Catalyzes the NAD(H)-dependent interconversion of D-fructose and D-mannitol in the mannitol metabolic pathway. The sequence is that of Mannitol 2-dehydrogenase from Aspergillus fumigatus (strain CBS 144.89 / FGSC A1163 / CEA10) (Neosartorya fumigata).